Reading from the N-terminus, the 387-residue chain is Carbamoyl phosphate synthase small chain (387 aa).

Residues 1–196 (MEGVLSQLAV…FSINKQKFLF (196 aa)) are CPSase. Residues Ser51, Gly245, and Gly247 each contribute to the L-glutamine site. Residues 197–384 (HVVVYDFGVK…IKLIVSQKTT (188 aa)) enclose the Glutamine amidotransferase type-1 domain. Cys273 acts as the Nucleophile in catalysis. Leu274, Gln277, Asn315, and Phe318 together coordinate L-glutamine. Catalysis depends on residues His357 and Glu359.

It belongs to the CarA family. As to quaternary structure, composed of two chains; the small (or glutamine) chain promotes the hydrolysis of glutamine to ammonia, which is used by the large (or ammonia) chain to synthesize carbamoyl phosphate. Tetramer of heterodimers (alpha,beta)4.

It carries out the reaction hydrogencarbonate + L-glutamine + 2 ATP + H2O = carbamoyl phosphate + L-glutamate + 2 ADP + phosphate + 2 H(+). It catalyses the reaction L-glutamine + H2O = L-glutamate + NH4(+). It functions in the pathway amino-acid biosynthesis; L-arginine biosynthesis; carbamoyl phosphate from bicarbonate: step 1/1. Its pathway is pyrimidine metabolism; UMP biosynthesis via de novo pathway; (S)-dihydroorotate from bicarbonate: step 1/3. Functionally, small subunit of the glutamine-dependent carbamoyl phosphate synthetase (CPSase). CPSase catalyzes the formation of carbamoyl phosphate from the ammonia moiety of glutamine, carbonate, and phosphate donated by ATP, constituting the first step of 2 biosynthetic pathways, one leading to arginine and/or urea and the other to pyrimidine nucleotides. The small subunit (glutamine amidotransferase) binds and cleaves glutamine to supply the large subunit with the substrate ammonia. In Buchnera aphidicola subsp. Acyrthosiphon pisum (strain APS) (Acyrthosiphon pisum symbiotic bacterium), this protein is Carbamoyl phosphate synthase small chain.